Consider the following 498-residue polypeptide: MFLLHILAIGACLLWYFVRSDKRKQGSNIPTIRRWPALFPEFLDRLSYNSCAARLVENGYREHKDRPFRLLKMDMDLVVIPLKYAQEMRALTSDELDPLTAVFDDNVGKVTGILLDSQLHTHAIQRRLTPRLPNIIPAMMDELNYAFQQVIPSEAGERLQTSWVPINPYDMVLELSTRAAARLFVGEPICRDEVFLKTSAAYSRNIFDTIHVSRSLGHIITPYLGSLIPSVRQFHQQFEYIQNLVLGEIAHRKQHSEDNKADDFLQWCMELARTKEESTPTALAQRTVGILSMAVVHTSAMATTHLLFDMISNQELREQLRTEQKQVLKQGWMGITQQTMLDMKQLDSVMRESQRINPVGEFTFRRIVRKPITLSDGFQLHPGQQIAIAARCINTDGDVLPDAETFKPMRWMEKESAASTGFAHSSDSNLHFGLGRYACPGRFLASYMIKAIISRVLFDYEFKLQDDSAAGRPPNLIHGDKIFPSRDVTVLFRRRHDE.

The N-terminal stretch at 1–20 is a signal peptide; it reads MFLLHILAIGACLLWYFVRS. Cys-439 contributes to the heme binding site.

Belongs to the cytochrome P450 family. Heme serves as cofactor.

The protein operates within secondary metabolite biosynthesis. Its function is as follows. Cytochrome P450 monooxygenase; part of the gene cluster that mediates the biosynthesis of paspalitrems, indole-diterpene (IDT) mycotoxins that are potent tremorgens in mammals. The geranylgeranyl diphosphate (GGPP) synthase idtG is proposed to catalyze the first step in IDT biosynthesis via catalysis of a series of iterative condensations of isopentenyl diphosphate (IPP) with dimethylallyl diphosphate (DMAPP), geranyl diphosphate (GPP), and farnesyl diphosphate (FPP), to form GGPP. Condensation of indole-3-glycerol phosphate with GGPP by the prenyltransferase idtC then forms 3-geranylgeranylindole (3-GGI). Epoxidation of the two terminal alkenes of the geranylgeranyl moiety by the FAD-dependent monooxygenase idtM, and cyclization by the terpene cyclase idtB then leads to the production of paspaline. The cytochrome P450 monooxygenase idtP then catalyzes oxidative elimination of the pendant methyl group at C-12 of paspaline and generates the C-10 ketone to yield 13-desoxypaxilline. The cytochrome P450 monooxygenase idtQ may catalyze the C-13 oxidation of 13-desoxypaxilline to afford paxilline. Considering that both paspalicine and paxilline were detected in C.paspali, idtQ also catalyzes the formation of paspalinine from 13-desoxypaxilline via paspalicine as an intermediate. Finally, the alpha-prenyltransferase idtF prenylates paspalinine at the C-20 or the C-21 positions to yield paspalitrems A and C, respectively. The hydroxylation of paspalitrem A at C-32 by a still unknown oxidase affords paspalitrem B. This Claviceps paspali (Rye ergot fungus) protein is Cytochrome P450 monooxygenase idtP.